Consider the following 143-residue polypeptide: MMKTLVVLAITLAVVSAGKVKFQDCGKGEVESLEVEGCSGDYCVIHKGKKLDLAISVTSNQDSANLKLDIVADINGVQIEVPGVDHDGCHYVKCPIKKGQHFDVKYTYSIPAILPTTKAKIIAKIIGDKGLGGCIVINGEIQD.

The first 17 residues, 1–17 (MMKTLVVLAITLAVVSA), serve as a signal peptide directing secretion. Disulfide bonds link Cys25–Cys134, Cys38–Cys43, and Cys89–Cys94.

The protein belongs to the NPC2 family.

It localises to the secreted. The polypeptide is Mite group 2 allergen Pso o 2 (ALLA) (Psoroptes ovis (Sheep scab mite)).